The primary structure comprises 398 residues: Probable elongation factor 1-gamma (398 aa).

A GST C-terminal domain is found at 66–199; that stretch reads GTSANAETVQ…SVAQFNQAKF (134 aa). Residues 210-248 form a disordered region; it reads APKAEKPKKEAKPAAAAAQPEDDEPKEEKSKDPFQDMPK. The span at 211-221 shows a compositional bias: basic and acidic residues; sequence PKAEKPKKEAK. The 160-residue stretch at 239–398 folds into the EF-1-gamma C-terminal domain; the sequence is SKDPFQDMPK…KKFNQGKIFK (160 aa).

As to quaternary structure, EF-1 is composed of four subunits: alpha, beta, delta, and gamma. In terms of processing, AMPylated by fic-1.

In terms of biological role, probably plays a role in anchoring the complex to other cellular components. This Caenorhabditis elegans protein is Probable elongation factor 1-gamma.